Reading from the N-terminus, the 572-residue chain is Sulfite reductase [NADPH] hemoprotein beta-component (572 aa).

[4Fe-4S] cluster is bound by residues cysteine 437, cysteine 443, cysteine 482, and cysteine 486. Cysteine 486 provides a ligand contact to siroheme.

Belongs to the nitrite and sulfite reductase 4Fe-4S domain family. As to quaternary structure, alpha(8)-beta(8). The alpha component is a flavoprotein, the beta component is a hemoprotein. Siroheme is required as a cofactor. Requires [4Fe-4S] cluster as cofactor.

The catalysed reaction is hydrogen sulfide + 3 NADP(+) + 3 H2O = sulfite + 3 NADPH + 4 H(+). It functions in the pathway sulfur metabolism; hydrogen sulfide biosynthesis; hydrogen sulfide from sulfite (NADPH route): step 1/1. Functionally, component of the sulfite reductase complex that catalyzes the 6-electron reduction of sulfite to sulfide. This is one of several activities required for the biosynthesis of L-cysteine from sulfate. The protein is Sulfite reductase [NADPH] hemoprotein beta-component of Staphylococcus epidermidis (strain ATCC 12228 / FDA PCI 1200).